The primary structure comprises 346 residues: MKFAILFGGNSYEHEISIVSAVVLKKVINQNLEFIFCDEERRFYHIPSEKMNSKTFSTKAYKKEKELFIKQGGFFSKGFLKENKLECECVINLIHGRDGEDGKIAALFEFYSIKFIGPRLEASVLSFNKELTKLYAKSVGVKTLDYTILRKNQNSKEKLSFPCIIKPARLGSSIGISIVKDEKDLEYAKDVGFEFDNDLVVEEFKNNIKEYNLAGCMINDEFVFSIIEEPKKKEFLDFEQKYLSFSGHNELIEADLSEELKEKLKDSFKKIYNPLFKGALIRCDFFILDNEIYLNEINPNPGSLANYLFKDFNTTLNALADQISLEKMIKINYNFLHSINGQKGKL.

Residues 133–327 enclose the ATP-grasp domain; sequence KLYAKSVGVK…ALADQISLEK (195 aa). An ATP-binding site is contributed by 159–211; sequence LSFPCIIKPARLGSSIGISIVKDEKDLEYAKDVGFEFDNDLVVEEFKNNIKEY. Residues Asp-284, Glu-296, and Asn-298 each contribute to the Mg(2+) site.

The protein belongs to the D-alanine--D-alanine ligase family. It depends on Mg(2+) as a cofactor. Requires Mn(2+) as cofactor.

The protein resides in the cytoplasm. The catalysed reaction is 2 D-alanine + ATP = D-alanyl-D-alanine + ADP + phosphate + H(+). Its pathway is cell wall biogenesis; peptidoglycan biosynthesis. Its function is as follows. Cell wall formation. In Campylobacter jejuni subsp. jejuni serotype O:2 (strain ATCC 700819 / NCTC 11168), this protein is D-alanine--D-alanine ligase.